The sequence spans 493 residues: Glycerol kinase 2 (493 aa).

Ser-12 serves as a coordination point for ADP. Residues Ser-12 and Thr-13 each contribute to the ATP site. Position 12 (Ser-12) interacts with sn-glycerol 3-phosphate. Lys-16 serves as a coordination point for ADP. Sn-glycerol 3-phosphate is bound by residues Arg-82, Glu-83, Tyr-134, and Asp-243. Positions 82, 83, 134, 243, and 244 each coordinate glycerol. 2 residues coordinate ADP: Thr-265 and Gly-308. Positions 265, 308, and 312 each coordinate ATP. An ADP-binding site is contributed by Asn-413.

It belongs to the FGGY kinase family. As to quaternary structure, homotetramer and homodimer (in equilibrium).

It carries out the reaction glycerol + ATP = sn-glycerol 3-phosphate + ADP + H(+). It participates in polyol metabolism; glycerol degradation via glycerol kinase pathway; sn-glycerol 3-phosphate from glycerol: step 1/1. Activated by phosphorylation and inhibited by fructose 1,6-bisphosphate (FBP). Its function is as follows. Key enzyme in the regulation of glycerol uptake and metabolism. Catalyzes the phosphorylation of glycerol to yield sn-glycerol 3-phosphate. In Clostridium tetani (strain Massachusetts / E88), this protein is Glycerol kinase 2.